Here is a 350-residue protein sequence, read N- to C-terminus: Casein kinase II subunit alpha' (350 aa).

Residue tyrosine 13 is modified to Phosphotyrosine. Serine 18 and serine 21 each carry phosphoserine. The Protein kinase domain maps to 40–325; it reads YQLVRKLGRG…AKEAMEHPYF (286 aa). ATP contacts are provided by residues 46–54 and lysine 69; that span reads LGRGKYSEV. Lysine 97 is subject to N6-acetyllysine. The Proton acceptor role is filled by aspartate 157. Serine 288 bears the Phosphoserine mark.

Belongs to the protein kinase superfamily. Ser/Thr protein kinase family. CK2 subfamily. As to quaternary structure, heterotetramer composed of two catalytic subunits (alpha chain and/or alpha' chain) and two regulatory subunits (beta chains). The tetramer can exist as a combination of 2 alpha/2 beta, 2 alpha'/2 beta or 1 alpha/1 alpha'/2 beta subunits. Also part of a CK2-SPT16-SSRP1 complex composed of SSRP1, SUPT16H, CSNK2A1, CSNK2A2 and CSNK2B, which forms following UV irradiation. Interacts with RNPS1. Interacts with CSNK2A2IP (via C-terminus). Interacts with SIRT6; preventing CSNK2A2 localization to the nucleus. Interacts with HIRIP3. As to expression, highly expressed in brain, testis and mature epididymal spermatozoa. Weakly expressed in kidney, liver, lung, spleen and thymus (at protein level).

The protein localises to the nucleus. It localises to the cytoplasm. It carries out the reaction L-seryl-[protein] + ATP = O-phospho-L-seryl-[protein] + ADP + H(+). The catalysed reaction is L-threonyl-[protein] + ATP = O-phospho-L-threonyl-[protein] + ADP + H(+). Constitutively active protein kinase whose activity is not directly affected by phosphorylation. Seems to be regulated by level of expression and localization. Functionally, catalytic subunit of a constitutively active serine/threonine-protein kinase complex that phosphorylates a large number of substrates containing acidic residues C-terminal to the phosphorylated serine or threonine. Regulates numerous cellular processes, such as cell cycle progression, apoptosis and transcription, as well as viral infection. May act as a regulatory node which integrates and coordinates numerous signals leading to an appropriate cellular response. During mitosis, functions as a component of the p53/TP53-dependent spindle assembly checkpoint (SAC) that maintains cyclin-B-CDK1 activity and G2 arrest in response to spindle damage. Also required for p53/TP53-mediated apoptosis, phosphorylating 'Ser-392' of p53/TP53 following UV irradiation. Phosphorylates a number of DNA repair proteins in response to DNA damage, such as MDC1, RAD9A, RAD51 and HTATSF1, promoting their recruitment to DNA damage sites. Can also negatively regulate apoptosis. Phosphorylates the caspases CASP9 and CASP2 and the apoptotic regulator NOL3. Phosphorylation protects CASP9 from cleavage and activation by CASP8, and inhibits the dimerization of CASP2 and activation of CASP8. Regulates transcription by direct phosphorylation of RNA polymerases I, II, III and IV. Also phosphorylates and regulates numerous transcription factors including NF-kappa-B, STAT1, CREB1, IRF1, IRF2, ATF1, SRF, MAX, JUN, FOS, MYC and MYB. Phosphorylates Hsp90 and its co-chaperones FKBP4 and CDC37, which is essential for chaperone function. Regulates Wnt signaling by phosphorylating CTNNB1 and the transcription factor LEF1. Acts as an ectokinase that phosphorylates several extracellular proteins. May phosphorylate histone H2A on 'Ser-1'. In Mus musculus (Mouse), this protein is Casein kinase II subunit alpha' (Csnk2a2).